The sequence spans 279 residues: 4-diphosphocytidyl-2-C-methyl-D-erythritol kinase (279 aa).

The active site involves Lys9. ATP is bound at residue 92-102 (PLAAGLGGGSS). Residue Asp134 is part of the active site.

It belongs to the GHMP kinase family. IspE subfamily.

It catalyses the reaction 4-CDP-2-C-methyl-D-erythritol + ATP = 4-CDP-2-C-methyl-D-erythritol 2-phosphate + ADP + H(+). Its pathway is isoprenoid biosynthesis; isopentenyl diphosphate biosynthesis via DXP pathway; isopentenyl diphosphate from 1-deoxy-D-xylulose 5-phosphate: step 3/6. Functionally, catalyzes the phosphorylation of the position 2 hydroxy group of 4-diphosphocytidyl-2C-methyl-D-erythritol. The sequence is that of 4-diphosphocytidyl-2-C-methyl-D-erythritol kinase from Syntrophus aciditrophicus (strain SB).